The primary structure comprises 178 residues: Peptide deformylase (178 aa).

Residues cysteine 96 and histidine 138 each contribute to the Fe cation site. Residue glutamate 139 is part of the active site. Histidine 142 contributes to the Fe cation binding site.

It belongs to the polypeptide deformylase family. Fe(2+) serves as cofactor.

The enzyme catalyses N-terminal N-formyl-L-methionyl-[peptide] + H2O = N-terminal L-methionyl-[peptide] + formate. Functionally, removes the formyl group from the N-terminal Met of newly synthesized proteins. Requires at least a dipeptide for an efficient rate of reaction. N-terminal L-methionine is a prerequisite for activity but the enzyme has broad specificity at other positions. In Bartonella tribocorum (strain CIP 105476 / IBS 506), this protein is Peptide deformylase.